A 690-amino-acid chain; its full sequence is Methionine--tRNA ligase (690 aa).

Residues 12 to 22 carry the 'HIGH' region motif; the sequence is PYANGSIHLGH. Positions 143, 146, 156, and 159 each coordinate Zn(2+). The short motif at 328–332 is the 'KMSKS' region element; the sequence is KMSKS. Lysine 331 contacts ATP. The region spanning 582-690 is the tRNA-binding domain; that stretch reads DFAKVDLRIA…SGAEPGMKVK (109 aa).

Belongs to the class-I aminoacyl-tRNA synthetase family. MetG type 1 subfamily. Homodimer. Zn(2+) is required as a cofactor.

Its subcellular location is the cytoplasm. It catalyses the reaction tRNA(Met) + L-methionine + ATP = L-methionyl-tRNA(Met) + AMP + diphosphate. Is required not only for elongation of protein synthesis but also for the initiation of all mRNA translation through initiator tRNA(fMet) aminoacylation. The sequence is that of Methionine--tRNA ligase from Thiobacillus denitrificans (strain ATCC 25259 / T1).